The chain runs to 117 residues: Small ribosomal subunit protein uS13 (117 aa).

The segment at 94 to 117 is disordered; sequence SLPLRGQRTKTNARTRKGPRRLIK.

Belongs to the universal ribosomal protein uS13 family. In terms of assembly, part of the 30S ribosomal subunit. Forms a loose heterodimer with protein S19. Forms two bridges to the 50S subunit in the 70S ribosome.

In terms of biological role, located at the top of the head of the 30S subunit, it contacts several helices of the 16S rRNA. In the 70S ribosome it contacts the 23S rRNA (bridge B1a) and protein L5 of the 50S subunit (bridge B1b), connecting the 2 subunits; these bridges are implicated in subunit movement. Contacts the tRNAs in the A and P-sites. The polypeptide is Small ribosomal subunit protein uS13 (Vesicomyosocius okutanii subsp. Calyptogena okutanii (strain HA)).